Reading from the N-terminus, the 207-residue chain is MEADSTTINVTETPKERKGKAPLLAAPPASSGVKRVLQKAPKGGYKRGLAVFDVVLRLAGIATALGAAIAMGSTDQTLPFFTQFFQFKAEFDDLPAFTFFVIANAITAAYLALTIPISIVCIIRPHLVAPRVLLIFLDTVMVALTTAAAGGTASIVYLAHNGNSDANWPAICQQFNDXCQKVSGAVVASFLTVVVLMLLIVLSAFAL.

The segment covering 1-12 (MEADSTTINVTE) has biased composition (polar residues). The tract at residues 1-20 (MEADSTTINVTETPKERKGK) is disordered. The Cytoplasmic portion of the chain corresponds to 1 to 48 (MEADSTTINVTETPKERKGKAPLLAAPPASSGVKRVLQKAPKGGYKRG). Residues 49–69 (LAVFDVVLRLAGIATALGAAI) traverse the membrane as a helical segment. At 70–98 (AMGSTDQTLPFFTQFFQFKAEFDDLPAFT) the chain is on the extracellular side. Residues 99 to 119 (FFVIANAITAAYLALTIPISI) form a helical membrane-spanning segment. Residues 120-131 (VCIIRPHLVAPR) are Cytoplasmic-facing. A helical membrane pass occupies residues 132 to 152 (VLLIFLDTVMVALTTAAAGGT). Residues 153 to 184 (ASIVYLAHNGNSDANWPAICQQFNDXCQKVSG) lie on the Extracellular side of the membrane. The chain crosses the membrane as a helical span at residues 185–205 (AVVASFLTVVVLMLLIVLSAF). Residues 206-207 (AL) are Cytoplasmic-facing.

The protein belongs to the Casparian strip membrane proteins (CASP) family. As to quaternary structure, homodimer and heterodimers.

It is found in the cell membrane. Regulates membrane-cell wall junctions and localized cell wall deposition. Required for establishment of the Casparian strip membrane domain (CSD) and the subsequent formation of Casparian strips, a cell wall modification of the root endodermis that determines an apoplastic barrier between the intraorganismal apoplasm and the extraorganismal apoplasm and prevents lateral diffusion. In Cynara cardunculus var. scolymus (Globe artichoke), this protein is Casparian strip membrane protein 1.